Reading from the N-terminus, the 104-residue chain is SOSS complex subunit C (104 aa).

This sequence belongs to the SOSS-C family. As to quaternary structure, belongs to the multiprotein complex Integrator. Component of the SOSS complex, composed of SOSS-B (SOSS-B1/NABP2 or SOSS-B2/NABP1), SOSS-A/INTS3 and SOSS-C/INIP.

The protein localises to the nucleus. Functionally, component of the SOSS complex, a multiprotein complex that functions downstream of the MRN complex to promote DNA repair and G2/M checkpoint. The SOSS complex associates with single-stranded DNA at DNA lesions and influences diverse endpoints in the cellular DNA damage response including cell-cycle checkpoint activation, recombinational repair and maintenance of genomic stability. Required for efficient homologous recombination-dependent repair of double-strand breaks (DSBs). The polypeptide is SOSS complex subunit C (INIP) (Taeniopygia guttata (Zebra finch)).